The following is a 284-amino-acid chain: Phosphatidylglycerol--prolipoprotein diacylglyceryl transferase (284 aa).

The next 7 helical transmembrane spans lie at 14–34 (IAFS…ACAI), 62–82 (YFLW…ILIY), 106–126 (FVGI…IASY), 136–156 (LLIY…FGRI), 190–210 (PSQL…VMWA), 218–238 (GLLI…AEFY), and 252–272 (LSMG…ILLY). An a 1,2-diacyl-sn-glycero-3-phospho-(1'-sn-glycerol)-binding site is contributed by Arg155.

It belongs to the Lgt family.

The protein localises to the cell inner membrane. It catalyses the reaction L-cysteinyl-[prolipoprotein] + a 1,2-diacyl-sn-glycero-3-phospho-(1'-sn-glycerol) = an S-1,2-diacyl-sn-glyceryl-L-cysteinyl-[prolipoprotein] + sn-glycerol 1-phosphate + H(+). Its pathway is protein modification; lipoprotein biosynthesis (diacylglyceryl transfer). Its function is as follows. Catalyzes the transfer of the diacylglyceryl group from phosphatidylglycerol to the sulfhydryl group of the N-terminal cysteine of a prolipoprotein, the first step in the formation of mature lipoproteins. In Helicobacter pylori (strain ATCC 700392 / 26695) (Campylobacter pylori), this protein is Phosphatidylglycerol--prolipoprotein diacylglyceryl transferase.